The primary structure comprises 103 residues: Small ribosomal subunit protein uS14c (103 aa).

The protein belongs to the universal ribosomal protein uS14 family. Part of the 30S ribosomal subunit.

Its subcellular location is the plastid. It is found in the chloroplast. In terms of biological role, binds 16S rRNA, required for the assembly of 30S particles. The protein is Small ribosomal subunit protein uS14c of Lolium perenne (Perennial ryegrass).